Reading from the N-terminus, the 392-residue chain is ADP-ribosylhydrolase ARH1 (392 aa).

Positions 79, 80, and 81 each coordinate Mg(2+). Lysine 109 contacts substrate. The segment at 125–127 (IQT) is substrate. Glycine 159 is a substrate binding site. Substrate regions lie at residues 192-194 (HNN), 309-311 (FSG), and 315-316 (SS). Mg(2+)-binding residues include aspartate 348, aspartate 350, and serine 351.

It belongs to the ADP-ribosylglycohydrolase family. As to quaternary structure, monomer. Mg(2+) serves as cofactor.

It catalyses the reaction N(omega)-(ADP-D-ribosyl)-L-arginyl-[protein] + H2O = ADP-D-ribose + L-arginyl-[protein]. In terms of biological role, specifically acts as an arginine mono-ADP-ribosylhydrolase by mediating the removal of mono-ADP-ribose attached to arginine residues on proteins. The sequence is that of ADP-ribosylhydrolase ARH1 (adprh) from Dictyostelium discoideum (Social amoeba).